A 514-amino-acid polypeptide reads, in one-letter code: Peptide chain release factor 3 (514 aa).

In terms of domain architecture, tr-type G spans 8 to 268; that stretch reads KKRRTFAIIS…TFLKFAPEPH (261 aa). Residues 17-24, 85-89, and 139-142 each bind GTP; these read SHPDAGKT, DTPGH, and NKLD.

It belongs to the TRAFAC class translation factor GTPase superfamily. Classic translation factor GTPase family. PrfC subfamily.

The protein resides in the cytoplasm. Its function is as follows. Increases the formation of ribosomal termination complexes and stimulates activities of RF-1 and RF-2. It binds guanine nucleotides and has strong preference for UGA stop codons. It may interact directly with the ribosome. The stimulation of RF-1 and RF-2 is significantly reduced by GTP and GDP, but not by GMP. The sequence is that of Peptide chain release factor 3 from Streptococcus sanguinis (strain SK36).